A 267-amino-acid polypeptide reads, in one-letter code: MRIYVCVKQVPDTSGKVAVNPDGTLNRASMAAIINPDDMSAIEQALKLKDETGCQVTALTMGPPPAEGMLREIIAMGADDGVLISAREFGGSDTFATSQIISAAIHKLGLSNEDMIFCGRQAIDGDTAQVGPQIAEKLSIPQVTYGAGIKKSGDLVLVKRMLEDGYMMIEVETPCLITCIQDKAVKPRYMTLNGIMECYSKPLLVLDYEALKDEPLIELDTIGLKGSPTNIFKSFTPPQKGVGVMLQGTDKEKVEDLVDKLMQKHVI.

As to quaternary structure, heterohexadecamer; tetramer of tetramers. Each tetramer is composed of 2 alpha (AcrC), a beta (AcrA) and a gamma (AcrB) subunit.

Its subcellular location is the cytoplasm. In terms of biological role, part of the ETF-acryloyl-CoA reductase complex involved in the pathway of L-alanine fermentation. The electron transfer flavoprotein (ETF) serves as a specific electron acceptor for acryloyl-CoA reductase. In Anaerotignum propionicum (Clostridium propionicum), this protein is Acryloyl-CoA reductase electron transfer subunit gamma (acrB).